Consider the following 676-residue polypeptide: ATP-dependent zinc metalloprotease FTSH 2, chloroplastic (676 aa).

A chloroplast-targeting transit peptide spans 1 to 32; it reads MAPTSMSLAAKTPLPFSTLPSSGVAQRPVSVT. The helical transmembrane segment at 155–175 threads the bilayer; the sequence is LLFNLIGNLAFPLILIGGLFL. 254 to 261 is a binding site for ATP; sequence GPPGTGKT. Histidine 475 is a binding site for Zn(2+). Glutamate 476 is a catalytic residue. Positions 479 and 553 each coordinate Zn(2+).

In the N-terminal section; belongs to the AAA ATPase family. It in the C-terminal section; belongs to the peptidase M41 family. The cofactor is Zn(2+).

Its subcellular location is the plastid. The protein localises to the chloroplast thylakoid membrane. Its function is as follows. Probable ATP-dependent zinc metallopeptidase. The polypeptide is ATP-dependent zinc metalloprotease FTSH 2, chloroplastic (FTSH2) (Oryza sativa subsp. japonica (Rice)).